Reading from the N-terminus, the 543-residue chain is Probable protein kinase UbiB (543 aa).

Positions 123–500 constitute a Protein kinase domain; that stretch reads DFDQQPLASA…HRRHAQARFL (378 aa). Residues 129-137 and Lys152 contribute to the ATP site; that span reads LASASVAQV. The Proton acceptor role is filled by Asp286. Helical transmembrane passes span 499–519 and 521–541; these read FLLGAGATLLLGSILLLPTHE and LASAGLTISIICWLNGWWKIS.

This sequence belongs to the ABC1 family. UbiB subfamily.

It is found in the cell inner membrane. It participates in cofactor biosynthesis; ubiquinone biosynthesis [regulation]. In terms of biological role, is probably a protein kinase regulator of UbiI activity which is involved in aerobic coenzyme Q (ubiquinone) biosynthesis. The sequence is that of Probable protein kinase UbiB from Tolumonas auensis (strain DSM 9187 / NBRC 110442 / TA 4).